A 220-amino-acid polypeptide reads, in one-letter code: Ribose-5-phosphate isomerase A (220 aa).

Substrate-binding positions include 28–31 (TGST), 81–84 (DGAD), and 94–97 (KGGG). The active-site Proton acceptor is the E103. K121 is a substrate binding site.

It belongs to the ribose 5-phosphate isomerase family. Homodimer.

It catalyses the reaction aldehydo-D-ribose 5-phosphate = D-ribulose 5-phosphate. Its pathway is carbohydrate degradation; pentose phosphate pathway; D-ribose 5-phosphate from D-ribulose 5-phosphate (non-oxidative stage): step 1/1. In terms of biological role, catalyzes the reversible conversion of ribose-5-phosphate to ribulose 5-phosphate. The chain is Ribose-5-phosphate isomerase A from Shewanella baltica (strain OS185).